Consider the following 311-residue polypeptide: VQ motif-containing protein 9 (311 aa).

Low complexity predominate over residues 1–27; sequence MDKSCNSSGDSSAVSASATSSTGNNTT. The disordered stretch occupies residues 1-78; it reads MDKSCNSSGD…QINQGNLHQH (78 aa). The short motif at 90-99 is the VQ element; it reads FRDVVQKLTG. Disordered stretches follow at residues 103–125, 228–266, and 290–311; these read HERI…SSRL, QQEN…PPLF, and GQLG…YKGH. A compositionally biased stretch (pro residues) spans 240–249; sequence FPPPHPPPPS. Residues 290 to 302 show a composition bias toward low complexity; sequence GQLGFPVSPTTVP.

Interacts (via N-terminus) with WRKY8. Highly expressed in roots and at lower levels in rosette leaves, cauline leaves, stems, flowers and siliques.

The protein resides in the nucleus. In terms of biological role, functions as a negative regulator of salt stress response. Functions as a repressor of WRKY8 transcription factor by decreasing the DNA-binding activity of WRKY8 and acts antagonistically with WRKY8 to regulate sodium and potassium homeostasis under salt stress. In Arabidopsis thaliana (Mouse-ear cress), this protein is VQ motif-containing protein 9.